Consider the following 512-residue polypeptide: cAMP-dependent protein kinase catalytic subunit (512 aa).

Over residues Met1 to Gly15 the composition is skewed to polar residues. Disordered stretches follow at residues Met1 to Trp79 and Ile118 to Asp166. A compositionally biased stretch (low complexity) spans Ser16–Leu27. 2 stretches are compositionally biased toward polar residues: residues Asn32–Gly52 and Ser62–Trp79. Residues Ser143–Asp166 are compositionally biased toward basic and acidic residues. Positions Phe201–Phe456 constitute a Protein kinase domain. ATP contacts are provided by residues Leu207–Val215 and Lys230. Asp324 (proton acceptor) is an active-site residue. Thr356 is subject to Phosphothreonine. In terms of domain architecture, AGC-kinase C-terminal spans Arg457–Phe512.

Belongs to the protein kinase superfamily. AGC Ser/Thr protein kinase family. cAMP subfamily.

It carries out the reaction L-seryl-[protein] + ATP = O-phospho-L-seryl-[protein] + ADP + H(+). The enzyme catalyses L-threonyl-[protein] + ATP = O-phospho-L-threonyl-[protein] + ADP + H(+). Its activity is regulated as follows. Activated by cAMP. This Schizosaccharomyces pombe (strain 972 / ATCC 24843) (Fission yeast) protein is cAMP-dependent protein kinase catalytic subunit (pka1).